The chain runs to 168 residues: Transcriptional regulator MraZ (168 aa).

SpoVT-AbrB domains lie at 8–51 (EYNQ…GGDR) and 90–140 (ALNM…KADT).

The protein belongs to the MraZ family. In terms of assembly, forms oligomers.

It localises to the cytoplasm. The protein localises to the nucleoid. In Cereibacter sphaeroides (strain ATCC 17029 / ATH 2.4.9) (Rhodobacter sphaeroides), this protein is Transcriptional regulator MraZ.